We begin with the raw amino-acid sequence, 384 residues long: Spermatogenesis-associated protein 32 (384 aa).

Residues 23–60 form a disordered region; the sequence is RDDLSQHQIQEEQELEADMLEQKPQLQVDLDLDPDPDP. A phosphoserine mark is found at serine 167 and serine 170. Disordered regions lie at residues 211–232, 284–310, and 340–366; these read DAHS…SSDL, VEER…LKSW, and LLQP…EKEN. Over residues 214-231 the composition is skewed to low complexity; it reads SAPPTTSSQAPSPLLSSD. Over residues 353 to 366 the composition is skewed to basic and acidic residues; it reads SKEDSVPPGKEKEN.

In terms of assembly, interacts with syntaxin-1 and ACTB. Detected in testis, and on the acrosomal cap of spermatids.

This chain is Spermatogenesis-associated protein 32 (SPATA32), found in Homo sapiens (Human).